Here is a 540-residue protein sequence, read N- to C-terminus: MAAKQITFNADARMALKRGVDKLADAVKVTLGPKGRNVIIEKKFGAPTVTKDGVTVAKEIELEDKLENVGAQMVKEVASKTSDVAGDGTTTATVLAQAILTAGLKSVTAGANPMDLKRGIDKAVEVVVAELRKMSQEVQDKNRIAQVATISANGDKAIGQLIADAFEKVGKDGVITVEEAKGTETTLEVVEGMQFDRGYLSPYFVTNPDTMEAVLEDAYILIHDKKISAMKDLLPILEKVVQTGRPLLIIAEDVEGEALATLVVNKLRGVLKVAAVKAPGFGDRRKAMLEDIAILTGGTVISEEKGYRLENATLDYLGQAERIIVDKDNTTIVGGKGDPAQIKARANQIRQQIEETTSDYDREKLQERLAKLAGGVAVLKIGAATEPEMKEKKARVEDALHATRAAVEEGIVPGGGVAYIRAIAALDKVEVENEDQKIGVQIVQRALEEPLRQIAANAGWEGSIVVQRVKEGQGDFGFNAQTEEFGNLLEQGVIDPTKVARTALENAASVAGLLLTTEAVVAEKPEKEKAAAPSPGDMDF.

ATP-binding positions include 30-33 (TLGP), K51, 87-91 (DGTTT), G415, and D495.

This sequence belongs to the chaperonin (HSP60) family. As to quaternary structure, forms a cylinder of 14 subunits composed of two heptameric rings stacked back-to-back. Interacts with the co-chaperonin GroES.

It is found in the cytoplasm. The catalysed reaction is ATP + H2O + a folded polypeptide = ADP + phosphate + an unfolded polypeptide.. Functionally, together with its co-chaperonin GroES, plays an essential role in assisting protein folding. The GroEL-GroES system forms a nano-cage that allows encapsulation of the non-native substrate proteins and provides a physical environment optimized to promote and accelerate protein folding. This Rhodothermus marinus (Rhodothermus obamensis) protein is Chaperonin GroEL.